The primary structure comprises 468 residues: ATP synthase subunit beta (468 aa).

Residue 155–162 (GGAGVGKT) participates in ATP binding.

This sequence belongs to the ATPase alpha/beta chains family. In terms of assembly, F-type ATPases have 2 components, CF(1) - the catalytic core - and CF(0) - the membrane proton channel. CF(1) has five subunits: alpha(3), beta(3), gamma(1), delta(1), epsilon(1). CF(0) has three main subunits: a(1), b(2) and c(9-12). The alpha and beta chains form an alternating ring which encloses part of the gamma chain. CF(1) is attached to CF(0) by a central stalk formed by the gamma and epsilon chains, while a peripheral stalk is formed by the delta and b chains.

The protein resides in the cell membrane. It carries out the reaction ATP + H2O + 4 H(+)(in) = ADP + phosphate + 5 H(+)(out). Its function is as follows. Produces ATP from ADP in the presence of a proton gradient across the membrane. The catalytic sites are hosted primarily by the beta subunits. The chain is ATP synthase subunit beta from Bacillus cereus (strain G9842).